Here is a 215-residue protein sequence, read N- to C-terminus: UPF0319 protein VVA1446 (215 aa).

A signal peptide spans 1–21; that stretch reads MNIIKPLTCILAMSISGLATA.

The protein belongs to the UPF0319 family.

This chain is UPF0319 protein VVA1446, found in Vibrio vulnificus (strain YJ016).